A 665-amino-acid polypeptide reads, in one-letter code: Translation factor GUF1 homolog, mitochondrial (665 aa).

Residues 1–35 (MAGAAVLRRSARRIYRHLAAAPAFSRSVLQQPKRL) constitute a mitochondrion transit peptide. The tract at residues 34–53 (RLLSSQSSPEHGARGAVSGS) is disordered. The region spanning 61-249 (ERVRNFSIIA…AVIERIPSPP (189 aa)) is the tr-type G domain. GTP is bound by residues 70-77 (AHVDHGKS), 142-146 (DTPGH), and 196-199 (NKID).

Belongs to the TRAFAC class translation factor GTPase superfamily. Classic translation factor GTPase family. LepA subfamily.

It is found in the mitochondrion inner membrane. The enzyme catalyses GTP + H2O = GDP + phosphate + H(+). In terms of biological role, promotes mitochondrial protein synthesis. May act as a fidelity factor of the translation reaction, by catalyzing a one-codon backward translocation of tRNAs on improperly translocated ribosomes. Binds to mitochondrial ribosomes in a GTP-dependent manner. In Sorghum bicolor (Sorghum), this protein is Translation factor GUF1 homolog, mitochondrial.